The sequence spans 684 residues: Acetophenone carboxylase delta subunit (684 aa).

The protein belongs to the oxoprolinase family. Acetophenone carboxylase consists of five subunits; a heterooctameric subcomplex of two alpha (Apc1), two beta (Apc2), two gamma (Apc3) and two delta (Apc4) subunits assembles with the epsilon (Apc5) subunit in an unknown stoichiometry. Mg(2+) serves as cofactor. It depends on Mn(2+) as a cofactor.

The protein localises to the cytoplasm. The catalysed reaction is acetophenone + hydrogencarbonate + 2 ATP + H2O = 3-oxo-3-phenylpropanoate + 2 ADP + 2 phosphate + 2 H(+). With respect to regulation, inhibited by zinc ions, carbamoylphosphate and beta,gamma-imido-ATP. Its function is as follows. Catalyzes the carboxylation of acetophenone to form 3-oxo-3-phenylpropanoate (benzoylacetate) in the anaerobic catabolism of ethylbenzene. Also carboxylates propiophenone at the same rate and 4-acetyl-pyridine at lower rates. The sequence is that of Acetophenone carboxylase delta subunit (apc4) from Aromatoleum aromaticum (strain DSM 19018 / LMG 30748 / EbN1) (Azoarcus sp. (strain EbN1)).